Here is an 88-residue protein sequence, read N- to C-terminus: Small ribosomal subunit protein bS18A (88 aa).

The protein belongs to the bacterial ribosomal protein bS18 family. Part of the 30S ribosomal subunit. Forms a tight heterodimer with protein bS6.

Its function is as follows. Binds as a heterodimer with protein bS6 to the central domain of the 16S rRNA, where it helps stabilize the platform of the 30S subunit. In Roseiflexus sp. (strain RS-1), this protein is Small ribosomal subunit protein bS18A.